The chain runs to 113 residues: U11-theraphotoxin-Hhn1a (113 aa).

A signal peptide spans 1-21; that stretch reads MNTVRVTFLLVFVLAVSLGQA. Positions 22 to 74 are excised as a propeptide; that stretch reads DKDENRMVMQEKTEQGKSYLDFAENLLLQKLEELEAKLLEEDSEESRNSRQKR. Cystine bridges form between cysteine 75–cysteine 90, cysteine 82–cysteine 95, and cysteine 89–cysteine 110.

Belongs to the neurotoxin 14 (magi-1) family. 01 (HNTX-16) subfamily. As to expression, expressed by the venom gland.

It localises to the secreted. Functionally, probable ion channel inhibitor. The polypeptide is U11-theraphotoxin-Hhn1a (Cyriopagopus hainanus (Chinese bird spider)).